Reading from the N-terminus, the 249-residue chain is Isoprenyl transferase (249 aa).

Asp-29 is an active-site residue. Mg(2+) is bound at residue Asp-29. Residues 30–33, Trp-34, Arg-42, His-46, and 74–76 contribute to the substrate site; these read GNGR and STE. Asn-77 (proton acceptor) is an active-site residue. Substrate-binding positions include Trp-78, Arg-80, Arg-197, and 203-205; that span reads RLS. Glu-216 serves as a coordination point for Mg(2+).

Belongs to the UPP synthase family. Homodimer. Mg(2+) serves as cofactor.

Its function is as follows. Catalyzes the condensation of isopentenyl diphosphate (IPP) with allylic pyrophosphates generating different type of terpenoids. The sequence is that of Isoprenyl transferase from Trichormus variabilis (strain ATCC 29413 / PCC 7937) (Anabaena variabilis).